We begin with the raw amino-acid sequence, 164 residues long: Translation initiation factor IF-3 (164 aa).

Belongs to the IF-3 family. Monomer.

The protein resides in the cytoplasm. Its function is as follows. IF-3 binds to the 30S ribosomal subunit and shifts the equilibrium between 70S ribosomes and their 50S and 30S subunits in favor of the free subunits, thus enhancing the availability of 30S subunits on which protein synthesis initiation begins. The polypeptide is Translation initiation factor IF-3 (Bordetella bronchiseptica (strain ATCC BAA-588 / NCTC 13252 / RB50) (Alcaligenes bronchisepticus)).